The primary structure comprises 371 residues: Beta-1,3-galactosyltransferase 4 (371 aa).

Over 1–4 the chain is Cytoplasmic; the sequence is MPLS. A helical; Signal-anchor for type II membrane protein membrane pass occupies residues 5–25; the sequence is LFRRLLLAVLLLVIIWTLFGP. The Lumenal portion of the chain corresponds to 26–371; it reads SGLGEELLSL…RCRFIAWLNS (346 aa). The N-linked (GlcNAc...) asparagine glycan is linked to asparagine 143. The tract at residues 187-208 is disordered; the sequence is GGPSEQWQKGKEPQEETTAVHK. Residues 194–207 are compositionally biased toward basic and acidic residues; that stretch reads QKGKEPQEETTAVH.

The protein belongs to the glycosyltransferase 31 family. As to expression, highly expressed in thymus, spleen, kidney and testis and, to a lesser extent, in brain and liver.

It is found in the golgi apparatus membrane. The catalysed reaction is a ganglioside GM2 (d18:1(4E)) + UDP-alpha-D-galactose = a ganglioside GM1 (d18:1(4E)) + UDP + H(+). The enzyme catalyses a ganglioside GM2 + UDP-alpha-D-galactose = a ganglioside GM1 + UDP + H(+). It carries out the reaction a ganglioside GD2 (d18:1(4E)) + UDP-alpha-D-galactose = a ganglioside GD1b (d18:1(4E)) + UDP + H(+). It catalyses the reaction a ganglioside GA2 (d18:1(4E)) + UDP-alpha-D-galactose = a ganglioside GA1 (d18:1(4E)) + UDP + H(+). It participates in protein modification; protein glycosylation. Involved in GM1/GD1B/GA1 ganglioside biosynthesis. The protein is Beta-1,3-galactosyltransferase 4 (B3galt4) of Rattus norvegicus (Rat).